The sequence spans 362 residues: RING finger protein 32 (362 aa).

The segment at 127 to 169 (CPICKEEFELRPQVLLSCSHVFHKACLQAFEKFTNKKTCPLCR) adopts an RING-type 1; atypical zinc-finger fold. In terms of domain architecture, IQ spans 186-215 (RIKCVTRIQAYWRGCVVRKWYRNLRKTVPP). Residues 293 to 352 (CSICLAPLSAAGGQRVGAGRRSREMALLSCSHVFHHACLLALEEFSVGDRPPFHACPLCR) form an RING-type 2; atypical zinc finger.

Highly expressed in testis, less abundant in ovary.

It is found in the cytoplasm. In terms of biological role, may play a role in sperm formation. This Homo sapiens (Human) protein is RING finger protein 32 (RNF32).